Here is a 1581-residue protein sequence, read N- to C-terminus: Pentafunctional AROM polypeptide (1581 aa).

Residues 1 to 384 (MPEPTKISIL…YEPKASVVPN (384 aa)) are 3-dehydroquinate synthase. NAD(+)-binding positions include 44 to 46 (DTN), 81 to 84 (EVSK), 114 to 116 (GGV), and aspartate 119. Arginine 130 is a binding site for 7-phospho-2-dehydro-3-deoxy-D-arabino-heptonate. 139–140 (TT) contacts NAD(+). Positions 146 and 152 each coordinate 7-phospho-2-dehydro-3-deoxy-D-arabino-heptonate. Residue lysine 161 coordinates NAD(+). Asparagine 162 serves as a coordination point for 7-phospho-2-dehydro-3-deoxy-D-arabino-heptonate. Residues 179-182 (FLET) and asparagine 190 contribute to the NAD(+) site. Glutamate 194 provides a ligand contact to Zn(2+). 7-phospho-2-dehydro-3-deoxy-D-arabino-heptonate is bound by residues 194–197 (EVIK) and lysine 250. Catalysis depends on glutamate 260, which acts as the Proton acceptor; for 3-dehydroquinate synthase activity. 7-phospho-2-dehydro-3-deoxy-D-arabino-heptonate-binding positions include 264–268 (RNLLN) and histidine 271. Residue histidine 271 participates in Zn(2+) binding. Histidine 275 serves as the catalytic Proton acceptor; for 3-dehydroquinate synthase activity. Histidine 287 and lysine 356 together coordinate 7-phospho-2-dehydro-3-deoxy-D-arabino-heptonate. Residue histidine 287 coordinates Zn(2+). Residues 397-842 (VHPGVPKESN…WDTLRQLFSV (446 aa)) are EPSP synthase. The active-site For EPSP synthase activity is cysteine 824. Positions 864–1056 (SASVFIIGMR…KQKKHSFFVS (193 aa)) are shikimate kinase. 871 to 878 (GMRGAGKT) is an ATP binding site. The tract at residues 1057–1277 (LTLPDLRSAS…AAPGQLSATE (221 aa)) is 3-dehydroquinase. The active-site Proton acceptor; for 3-dehydroquinate dehydratase activity is the histidine 1180. Lysine 1208 (schiff-base intermediate with substrate; for 3-dehydroquinate dehydratase activity) is an active-site residue. The tract at residues 1290-1581 (KKRFAIFGNP…ARTAVLGDSA (292 aa)) is shikimate dehydrogenase.

In the N-terminal section; belongs to the sugar phosphate cyclases superfamily. Dehydroquinate synthase family. It in the 2nd section; belongs to the EPSP synthase family. The protein in the 3rd section; belongs to the shikimate kinase family. This sequence in the 4th section; belongs to the type-I 3-dehydroquinase family. In the C-terminal section; belongs to the shikimate dehydrogenase family. Homodimer. Zn(2+) is required as a cofactor.

Its subcellular location is the cytoplasm. It catalyses the reaction 7-phospho-2-dehydro-3-deoxy-D-arabino-heptonate = 3-dehydroquinate + phosphate. The enzyme catalyses 3-dehydroquinate = 3-dehydroshikimate + H2O. It carries out the reaction shikimate + NADP(+) = 3-dehydroshikimate + NADPH + H(+). The catalysed reaction is shikimate + ATP = 3-phosphoshikimate + ADP + H(+). It catalyses the reaction 3-phosphoshikimate + phosphoenolpyruvate = 5-O-(1-carboxyvinyl)-3-phosphoshikimate + phosphate. It participates in metabolic intermediate biosynthesis; chorismate biosynthesis; chorismate from D-erythrose 4-phosphate and phosphoenolpyruvate: step 2/7. Its pathway is metabolic intermediate biosynthesis; chorismate biosynthesis; chorismate from D-erythrose 4-phosphate and phosphoenolpyruvate: step 3/7. The protein operates within metabolic intermediate biosynthesis; chorismate biosynthesis; chorismate from D-erythrose 4-phosphate and phosphoenolpyruvate: step 4/7. It functions in the pathway metabolic intermediate biosynthesis; chorismate biosynthesis; chorismate from D-erythrose 4-phosphate and phosphoenolpyruvate: step 5/7. It participates in metabolic intermediate biosynthesis; chorismate biosynthesis; chorismate from D-erythrose 4-phosphate and phosphoenolpyruvate: step 6/7. In terms of biological role, the AROM polypeptide catalyzes 5 consecutive enzymatic reactions in prechorismate polyaromatic amino acid biosynthesis. The chain is Pentafunctional AROM polypeptide from Aspergillus terreus (strain NIH 2624 / FGSC A1156).